The sequence spans 489 residues: Betaine aldehyde dehydrogenase (489 aa).

K(+)-binding residues include T26 and D93. 150 to 152 (GAW) contacts NAD(+). K162 (charge relay system) is an active-site residue. 176–179 (KPSE) provides a ligand contact to NAD(+). A K(+)-binding site is contributed by V180. NAD(+) is bound at residue 229–232 (GVET). L245 contacts K(+). E251 serves as the catalytic Proton acceptor. G253, C285, and E386 together coordinate NAD(+). C285 functions as the Nucleophile in the catalytic mechanism. At C285 the chain carries Cysteine sulfenic acid (-SOH). Residues K456 and G459 each coordinate K(+). The active-site Charge relay system is E463.

It belongs to the aldehyde dehydrogenase family. As to quaternary structure, dimer of dimers. K(+) is required as a cofactor.

It catalyses the reaction betaine aldehyde + NAD(+) + H2O = glycine betaine + NADH + 2 H(+). Its pathway is amine and polyamine biosynthesis; betaine biosynthesis via choline pathway; betaine from betaine aldehyde: step 1/1. Its function is as follows. Involved in the biosynthesis of the osmoprotectant glycine betaine. Catalyzes the irreversible oxidation of betaine aldehyde to the corresponding acid. The protein is Betaine aldehyde dehydrogenase of Burkholderia pseudomallei (strain 668).